Reading from the N-terminus, the 303-residue chain is RELT-like protein 2 (303 aa).

A helical transmembrane segment spans residues 15-35 (LYMLFLLVLVFFLMGLVGFMI). 2 disordered regions span residues 46 to 67 (CRTSRGSEPDDAQLQPPEDDDM) and 111 to 303 (SSLQ…AGGV). The residue at position 52 (S52) is a Phosphoserine. Composition is skewed to basic and acidic residues over residues 148–158 (RSKEGKSRPRP) and 172–188 (THIEKRYGLHEHRDGSP). A compositionally biased stretch (gly residues) spans 194–212 (GSGGGQDPGGGQGPGGGQP).

It belongs to the RELT family. Interacts with RELT, RELL1, OXSR1, PLSCR1 and TRAF2.

It localises to the cell membrane. In terms of biological role, induces activation of MAPK14/p38 cascade, when overexpressed. Induces apoptosis, when overexpressed. This chain is RELT-like protein 2 (RELL2), found in Bos taurus (Bovine).